Consider the following 284-residue polypeptide: L-ribulose-5-phosphate 3-epimerase UlaE (284 aa).

The protein belongs to the L-ribulose-5-phosphate 3-epimerase family.

It carries out the reaction L-ribulose 5-phosphate = L-xylulose 5-phosphate. Its pathway is cofactor degradation; L-ascorbate degradation; D-xylulose 5-phosphate from L-ascorbate: step 3/4. In terms of biological role, catalyzes the isomerization of L-xylulose-5-phosphate to L-ribulose-5-phosphate. Is involved in the anaerobic L-ascorbate utilization. The polypeptide is L-ribulose-5-phosphate 3-epimerase UlaE (Escherichia coli (strain K12 / MC4100 / BW2952)).